The sequence spans 412 residues: 4-hydroxy-3-methylbut-2-en-1-yl diphosphate synthase (ferredoxin) (412 aa).

Positions 1–12 (MQTLDRPNAPSQ) are enriched in polar residues. Residues 1–22 (MQTLDRPNAPSQQPYPEPVYPR) form a disordered region. [4Fe-4S] cluster contacts are provided by C314, C317, C348, and E355.

Belongs to the IspG family. The cofactor is [4Fe-4S] cluster.

It carries out the reaction (2E)-4-hydroxy-3-methylbut-2-enyl diphosphate + 2 oxidized [2Fe-2S]-[ferredoxin] + H2O = 2-C-methyl-D-erythritol 2,4-cyclic diphosphate + 2 reduced [2Fe-2S]-[ferredoxin] + H(+). The protein operates within isoprenoid biosynthesis; isopentenyl diphosphate biosynthesis via DXP pathway; isopentenyl diphosphate from 1-deoxy-D-xylulose 5-phosphate: step 5/6. In terms of biological role, converts 2C-methyl-D-erythritol 2,4-cyclodiphosphate (ME-2,4cPP) into 1-hydroxy-2-methyl-2-(E)-butenyl 4-diphosphate. The sequence is that of 4-hydroxy-3-methylbut-2-en-1-yl diphosphate synthase (ferredoxin) from Synechococcus sp. (strain JA-3-3Ab) (Cyanobacteria bacterium Yellowstone A-Prime).